Here is a 70-residue protein sequence, read N- to C-terminus: MKQGIHPEYTEITATCSCGNVIKTRSTVGKNLNLDVCGNCHPFYTGKQRVVDTGGRVERFNKRFSIPSTK.

Zn(2+) is bound by residues C16, C18, C37, and C40.

It belongs to the bacterial ribosomal protein bL31 family. Type A subfamily. As to quaternary structure, part of the 50S ribosomal subunit. It depends on Zn(2+) as a cofactor.

In terms of biological role, binds the 23S rRNA. This chain is Large ribosomal subunit protein bL31, found in Actinobacillus pleuropneumoniae serotype 5b (strain L20).